We begin with the raw amino-acid sequence, 409 residues long: MAIAAPLKEKTVQKPGTTVYPILIIIGICHMLNDSLQAVIPAMFPILERSMSLTFTQLGIIAFTLNMVSSVMQPVVGWYTDKRPRPYALPVGLTASMLGILGLAFAPSFITILCCVFFIGLGSAIFHPEGSRVAYMAAGTKRGLAQSIYQVGGNSGQAMAPLITALILVPLGQFGAVWFTLVAALAVMFLMYIAKWYASRLGSLAQKSGKQKKTAENTAITKSVVSALIIIIFLIFARSWYTSAIGNFYTFYAMDTYHVSIQQAQSYIFVFLLFGAIGTFLGGPLADRFGKRFVILGSLLCSAPLAIVLPFAGPVLAYGVLALIGLVLMSSFSVTVVYAQELVPGKIGTMSGLTVGLAFGMGAIGAVALGALIDAAGLTPTMIAIAFLPVLGILAFLLPSDQKLREWHS.

10 helical membrane-spanning segments follow: residues 22–42 (ILIIIGICHMLNDSLQAVIPA), 58–78 (LGIIAFTLNMVSSVMQPVVGW), 99–119 (GILGLAFAPSFITILCCVFFI), 174–194 (FGAVWFTLVAALAVMFLMYIA), 217–237 (NTAITKSVVSALIIIIFLIFA), 266–286 (SYIFVFLLFGAIGTFLGGPLA), 293–312 (FVILGSLLCSAPLAIVLPFA), 316–338 (LAYGVLALIGLVLMSSFSVTVVY), 353–373 (LTVGLAFGMGAIGAVALGALI), and 378–398 (LTPTMIAIAFLPVLGILAFLL).

This sequence belongs to the major facilitator superfamily.

It is found in the cell membrane. This is an uncharacterized protein from Bacillus subtilis (strain 168).